Reading from the N-terminus, the 442-residue chain is 26S proteasome non-ATPase regulatory subunit 12 homolog B (442 aa).

Positions 1 to 129 form a coiled coil; that stretch reads MEESRQLESS…KEEQGLIAEA (129 aa). One can recognise a PCI domain in the interval 232-403; sequence EICRSYKAIY…GIICFQIVKD (172 aa).

The protein belongs to the proteasome subunit p55 family. In terms of assembly, component of the 19S regulatory particle (RP/PA700) lid subcomplex of the 26S proteasome. The 26S proteasome is composed of a core protease (CP), known as the 20S proteasome, capped at one or both ends by the 19S regulatory particle (RP/PA700). The RP/PA700 complex is composed of at least 17 different subunits in two subcomplexes, the base and the lid, which form the portions proximal and distal to the 20S proteolytic core, respectively. Ubiquitous with highest expression in flowers.

It localises to the cytoplasm. The protein resides in the nucleus. Functionally, acts as a regulatory subunit of the 26 proteasome which is involved in the ATP-dependent degradation of ubiquitinated proteins. Acts redundantly with RPN5A. The polypeptide is 26S proteasome non-ATPase regulatory subunit 12 homolog B (RPN5B) (Arabidopsis thaliana (Mouse-ear cress)).